Consider the following 125-residue polypeptide: Fluoride-specific ion channel FluC (125 aa).

The next 4 membrane-spanning stretches (helical) occupy residues 1-21 (MIQA…RYYV), 32-52 (AFPW…GVFA), 68-88 (LLIT…LDAI), and 101-121 (IYIA…LAVM). Na(+)-binding residues include G75 and T78.

This sequence belongs to the fluoride channel Fluc/FEX (TC 1.A.43) family.

Its subcellular location is the cell inner membrane. The enzyme catalyses fluoride(in) = fluoride(out). Na(+) is not transported, but it plays an essential structural role and its presence is essential for fluoride channel function. Functionally, fluoride-specific ion channel. Important for reducing fluoride concentration in the cell, thus reducing its toxicity. The polypeptide is Fluoride-specific ion channel FluC (Rhizobium etli (strain CIAT 652)).